The primary structure comprises 134 residues: U34-theraphotoxin-Cg1a (134 aa).

A signal peptide spans 1–19 (MKLAVVFLLTTVVFTLAQS). Disulfide bonds link Cys-24–Cys-35, Cys-29–Cys-53, and Cys-63–Cys-84. The interval 97–134 (EQSSTSTSSTQGPITSSTVTTQSEATTETETTTAAEGK) is disordered. Residues 99–134 (SSTSTSSTQGPITSSTVTTQSEATTETETTTAAEGK) show a composition bias toward low complexity.

Belongs to the neurotoxin 32 family. In terms of tissue distribution, expressed by the venom gland.

The protein resides in the secreted. The protein is U34-theraphotoxin-Cg1a of Chilobrachys guangxiensis (Chinese earth tiger tarantula).